The sequence spans 1578 residues: Neurexin-3 (1578 aa).

Positions 1–27 (MSFTLHSVFFTLKVSSFLGSLVGLCLG) are cleaved as a signal peptide. One can recognise a Laminin G-like 1 domain in the interval 28-202 (LEFMGLPNQW…SVQLEAEGPC (175 aa)). Over 28-1503 (LEFMGLPNQW…EVIRESNSTT (1476 aa)) the chain is Extracellular. Asn-58 and Asn-105 each carry an N-linked (GlcNAc...) asparagine glycan. The EGF-like 1 domain maps to 198–235 (AEGPCGERPCENGGICFLLDGHPTCDCSTTGYGGTLCS). 3 disulfides stabilise this stretch: Cys-202–Cys-213, Cys-207–Cys-222, and Cys-224–Cys-234. Laminin G-like domains lie at 260-444 (ENVA…VFKC) and 451-643 (DPIN…KSSC). Ca(2+) is bound by residues Asp-308, Leu-325, and Met-378. Intrachain disulfides connect Cys-408/Cys-444, Cys-614/Cys-643, Cys-651/Cys-662, Cys-656/Cys-671, and Cys-673/Cys-683. One can recognise an EGF-like 2 domain in the interval 647 to 684 (SAKQCDSYPCKNNAVCKDGWNRFICDCTGTGYWGRTCE). Laminin G-like domains lie at 689-861 (ILSY…IDYC) and 875-1050 (DPVT…DRGC). Ca(2+) contacts are provided by Asp-736 and Leu-753. Asn-761 is a glycosylation site (N-linked (GlcNAc...) asparagine). Ca(2+) is bound at residue Arg-811. Cystine bridges form between Cys-1022-Cys-1050, Cys-1057-Cys-1068, Cys-1062-Cys-1077, and Cys-1079-Cys-1089. Positions 1053–1090 (PSTTCQEDSCANQGVCMQQWEGFTCDCSMTSYSGNQCN) constitute an EGF-like 3 domain. The region spanning 1094–1294 (ATYIFGKSGG…NPNIKINGSV (201 aa)) is the Laminin G-like 6 domain. Ca(2+) contacts are provided by Asp-1146 and Ile-1163. Asn-1193 is a glycosylation site (N-linked (GlcNAc...) asparagine). Residues Ile-1245 and Asn-1247 each contribute to the Ca(2+) site. N-linked (GlcNAc...) asparagine glycans are attached at residues Asn-1291 and Asn-1335. Residues 1328–1352 (ATTTTRKNRSTASIQPTSDDLVSSA) are disordered. Positions 1337–1352 (STASIQPTSDDLVSSA) are enriched in polar residues. O-linked (Xyl...) (heparan sulfate) serine glycosylation occurs at Ser-1351. N-linked (GlcNAc...) asparagine glycosylation occurs at Asn-1500. A helical membrane pass occupies residues 1504 to 1524 (GMVVGIVAAAALCILILLYAM). The Cytoplasmic portion of the chain corresponds to 1525–1578 (YKYRNRDEGSYQVDETRNYISNSAQSNGTLMKEKQASSKSGHKKQKNKDKEYYV). A disordered region spans residues 1546 to 1578 (NSAQSNGTLMKEKQASSKSGHKKQKNKDKEYYV).

This sequence belongs to the neurexin family. The laminin G-like domain 2 binds to NXPH1. Isoform 8/alpha-4B binds to alpha-dystroglycan. The cytoplasmic C-terminal region binds to CASK. Specific isoforms bind neuroligins NLGN1, NLGN2 and NLGN3. Interacts with CLSTN3. Post-translationally, O-glycosylated; contains heparan sulfate. Heparan sulfate attachment is required for synapse development by mediating interactions with neuroligins. In terms of tissue distribution, brain.

The protein resides in the presynaptic cell membrane. Its function is as follows. Neuronal cell surface protein that may be involved in cell recognition and cell adhesion. May mediate intracellular signaling. This chain is Neurexin-3 (Nrxn3), found in Rattus norvegicus (Rat).